A 167-amino-acid chain; its full sequence is 18.8 kDa class II heat shock protein (167 aa).

The 119-residue stretch at 49–167 folds into the sHSP domain; the sequence is DAKAMAATPA…KPKTVEVKVA (119 aa).

Belongs to the small heat shock protein (HSP20) family.

It is found in the cytoplasm. The polypeptide is 18.8 kDa class II heat shock protein (SHSP-2) (Ipomoea nil (Japanese morning glory)).